Reading from the N-terminus, the 151-residue chain is Ribosome maturation factor RimP (151 aa).

Belongs to the RimP family.

The protein localises to the cytoplasm. Its function is as follows. Required for maturation of 30S ribosomal subunits. This chain is Ribosome maturation factor RimP, found in Shewanella baltica (strain OS223).